We begin with the raw amino-acid sequence, 274 residues long: Rhamnulose-1-phosphate aldolase (274 aa).

Residue glutamate 117 is part of the active site. Residues histidine 141, histidine 143, and histidine 212 each contribute to the Zn(2+) site.

This sequence belongs to the aldolase class II family. RhaD subfamily. As to quaternary structure, homotetramer. Requires Zn(2+) as cofactor.

It localises to the cytoplasm. The enzyme catalyses L-rhamnulose 1-phosphate = (S)-lactaldehyde + dihydroxyacetone phosphate. Its pathway is carbohydrate degradation; L-rhamnose degradation; glycerone phosphate from L-rhamnose: step 3/3. In terms of biological role, catalyzes the reversible cleavage of L-rhamnulose-1-phosphate to dihydroxyacetone phosphate (DHAP) and L-lactaldehyde. This chain is Rhamnulose-1-phosphate aldolase, found in Escherichia fergusonii (strain ATCC 35469 / DSM 13698 / CCUG 18766 / IAM 14443 / JCM 21226 / LMG 7866 / NBRC 102419 / NCTC 12128 / CDC 0568-73).